Consider the following 230-residue polypeptide: Somatolactin (230 aa).

The N-terminal stretch at 1–23 (MKKTTVLQVCMVFVVCSLQAVIG) is a signal peptide. Disulfide bonds link Cys-28-Cys-38, Cys-87-Cys-202, and Cys-219-Cys-227. Asn-226 is a glycosylation site (N-linked (GlcNAc...) asparagine).

Belongs to the somatotropin/prolactin family.

It localises to the secreted. The polypeptide is Somatolactin (Carassius auratus (Goldfish)).